Here is a 283-residue protein sequence, read N- to C-terminus: ATP phosphoribosyltransferase (283 aa).

It belongs to the ATP phosphoribosyltransferase family. Long subfamily. The cofactor is Mg(2+).

The protein localises to the cytoplasm. The enzyme catalyses 1-(5-phospho-beta-D-ribosyl)-ATP + diphosphate = 5-phospho-alpha-D-ribose 1-diphosphate + ATP. The protein operates within amino-acid biosynthesis; L-histidine biosynthesis; L-histidine from 5-phospho-alpha-D-ribose 1-diphosphate: step 1/9. Its activity is regulated as follows. Feedback inhibited by histidine. Its function is as follows. Catalyzes the condensation of ATP and 5-phosphoribose 1-diphosphate to form N'-(5'-phosphoribosyl)-ATP (PR-ATP). Has a crucial role in the pathway because the rate of histidine biosynthesis seems to be controlled primarily by regulation of HisG enzymatic activity. This is ATP phosphoribosyltransferase from Bacteroides thetaiotaomicron (strain ATCC 29148 / DSM 2079 / JCM 5827 / CCUG 10774 / NCTC 10582 / VPI-5482 / E50).